We begin with the raw amino-acid sequence, 374 residues long: WAT1-related protein At2g39510 (374 aa).

The next 10 membrane-spanning stretches (helical) occupy residues 9–29 (FITV…AKFA), 38–58 (VLAS…AYFL), 64–84 (PKMT…EPTI), 99–119 (TFTA…AWIF), 135–155 (ILGT…KGPL), 182–202 (GASL…LQAI), 212–232 (SLTA…ALFI), 249–269 (LAAV…QGVI), 284–304 (LSMV…MFLG), and 306–326 (ILGA…KSKD). EamA domains lie at 19–147 (YAGL…GAML) and 191–320 (ICWA…YSVL). The tract at residues 350 to 374 (SKANAKMDTNDASVVISRPNTNESV) is disordered.

The protein belongs to the drug/metabolite transporter (DMT) superfamily. Plant drug/metabolite exporter (P-DME) (TC 2.A.7.4) family.

The protein localises to the membrane. The protein is WAT1-related protein At2g39510 of Arabidopsis thaliana (Mouse-ear cress).